The sequence spans 296 residues: Protein TIC 21, chloroplastic (296 aa).

The N-terminal 90 residues, 1-90, are a transit peptide targeting the chloroplast; that stretch reads MQSLLLPPAS…VAFSYPTSPS (90 aa). The next 4 helical transmembrane spans lie at 125 to 145, 156 to 176, 208 to 228, and 250 to 270; these read FWGQ…SIVV, YATA…FGYI, VNIL…GFLV, and VLAL…SHFL.

As to quaternary structure, homomultimer. Part of the translocon complex. In terms of tissue distribution, ubiquitous. Highest expression in green tissues and very low levels in mature pollen.

It is found in the plastid. The protein localises to the chloroplast inner membrane. Its function is as follows. Involved in chloroplast protein import across the inner envelope membrane. Also acts as a chloroplast permease regulating the iron transport and homeostasis. Involved in the uptake and sequestration of iron in plastids. The chain is Protein TIC 21, chloroplastic (TIC21) from Arabidopsis thaliana (Mouse-ear cress).